Reading from the N-terminus, the 105-residue chain is MVKSVGNLADFEAELKAAGEKLVVVDFSATWCGPCKMIKPFFHSLCDKFGDVVFIEIDVDDAQDVATHCDVKCMPTFQFYKNGKKVQEFSGANKEKLEETIKSLV.

In terms of domain architecture, Thioredoxin spans 2-105; that stretch reads VKSVGNLADF…KLEETIKSLV (104 aa). Catalysis depends on nucleophile residues Cys32 and Cys35. A disulfide bond links Cys32 and Cys35. Cys69 and Cys73 each carry S-nitrosocysteine.

Belongs to the thioredoxin family. Post-translationally, may be nitrosylated on several cysteine residues, depending on the oxidation state. Nitrosylated Cys-73 may serve as donor for nitrosylation of target proteins.

The protein resides in the nucleus. Its subcellular location is the cytoplasm. It localises to the secreted. In terms of biological role, participates in various redox reactions through the reversible oxidation of its active center dithiol to a disulfide and catalyzes dithiol-disulfide exchange reactions. Plays a role in the reversible S-nitrosylation of cysteine residues in target proteins, and thereby contributes to the response to intracellular nitric oxide. Nitrosylates the active site Cys of CASP3 in response to nitric oxide (NO), and thereby inhibits caspase-3 activity. Induces the FOS/JUN AP-1 DNA binding activity in ionizing radiation (IR) cells through its oxidation/reduction status and stimulates AP-1 transcriptional activity. In Gallus gallus (Chicken), this protein is Thioredoxin (TXN).